The chain runs to 678 residues: MDMESWKLLRSVCVLSFLLGSCFVYQSLRVVDAQEDPKPAVTLQVDASNGGGRPIPETLFGIFFEEINHAGAGGLWAELVSNRGFEAGGQNTPSNIWPWSIVGDHSSIYVATDRSSCFERNKIALRMDVLCDSKGCPSGGVGVYNPGYWGMNIEEGKKYKVALYVRSTGDIDLSVSLTSSNGSRTLASEKIIASASDVSKWIKKEVLLEAKATDPSARLQLTTTKKGSIWIDQVSAMPVDTHKGHGFRNDLFQMMADIKPRFIRFPGGCFVEGEWLSNAFRWKETVGPWEERPGHFGDVWKYWTDDGLGHFEFFQMAEDIGAAPIWVFNNGISHNDEVETASIMPFVQEALDGIEFARGDANSTWGSVRAKMGRQEPFELKYVAIGNEDCGKTYYRGNYIVFYDAIKKAYPDIKIISNCDGSSHPLDHPADYYDYHIYTSASNLFSMYHQFDRTSRKGPKAFVSEYAVTGKDAGTGSLLASLAEAAFLIGLEKNSDIVEMASYAPLFVNTNDRRWNPDAIVFNSSHLYGTPSYWVQRFFAESSGATLLTSTLKGNSTSLVASAISWKNNGKDYIRIKAVNFGANSENMQVLVTGLDPNVMRVSGSKKTVLTSTNVMDENSFSQPEKVVPHESLLELAEEDMTVVLPPHSFSSFDLLKESAKIRMPISDSSSHQKTTTV.

The first 33 residues, 1–33 (MDMESWKLLRSVCVLSFLLGSCFVYQSLRVVDA), serve as a signal peptide directing secretion. A CBM-cenC domain is found at 152-239 (NIEEGKKYKV…WIDQVSAMPV (88 aa)). Asparagine 181, asparagine 362, asparagine 523, and asparagine 555 each carry an N-linked (GlcNAc...) asparagine glycan.

It belongs to the glycosyl hydrolase 51 family. As to expression, expressed in roots, leaves, flowers, stems, siliques and seedlings. Observed in zones of cell proliferation, the vascular system and floral abscission zones. Expressed in the guard cells in stems, in xylem vessels and parenchyma cells surrounding the vessels, in the cambium and in the phloem, but not in the secondary xylem.

It localises to the secreted. It is found in the extracellular space. The protein localises to the extracellular matrix. The catalysed reaction is Hydrolysis of terminal non-reducing alpha-L-arabinofuranoside residues in alpha-L-arabinosides.. May be involved in the coordinated dissolution of the cell wall matrix during abscission and in the secondary cell wall formation in xylem vessels. Prefers arabinoxylan, but may also use pectic arabinans as substrates. The sequence is that of Alpha-L-arabinofuranosidase 1 (ASD1) from Arabidopsis thaliana (Mouse-ear cress).